Consider the following 669-residue polypeptide: MFAPATQPQQQHEQKKQSETVSSAEEDALKWNTDCVYFLASPLTCKKGPECEYRHSEYARMNPRDCYYWLNGNCLNPKCGFRHPPLEGLLGNQGGAPAVSVQPIHATAQHPSVAKQPVPCLFFQKGMCMKGDMCSFLHTPNPAAYKKQHPVEAKPATDPQCSKKPIENNTEEKKLPDVNLSKVVKGHTDISAAPRVASTGLRDSRSVEGYIPNHVGYEPVVQRKGPGFPSFTEGGHSTQLLQKYGSDDNNSFHNGKDADDVLRESSPGFDVLVDNEAGDSEYYHVEDRYGRRSQERGNSEYDPDFSAIADGDKEALREQRFDSYDRREDRGWGHRRVSSEREDRLDRRVYAEDERSENILESDLRYRLAKQRKGNGMRLSVGGHDYAAPDSSMDRGYRESRRDTPRENSISSSRLQGRIKLRERSNGEEGHHFDRRSERGRDRSELPSQGRLRDRIKGRLEENHSGNQERGFGAPWARRREMEDERKSAPKSSREESKPEPSLGKRKSFEEDHHSHKRSRDSFAAPLPFSEILKRKKAAASGGSRNNNKDETISKEEAGDEIKLITEEKTEVVSEPKAEVEEEGTVMEEEEIVGEEVYEGNEDEQAYEGDELNGEYYYEEGYEEEGGEYAYEEGEEVVYAAEEGEEEATEGGEGEGEEDIEKKTVEMLS.

A compositionally biased stretch (low complexity) spans 1–11; it reads MFAPATQPQQQ. Positions 1–23 are disordered; it reads MFAPATQPQQQHEQKKQSETVSS. C3H1-type zinc fingers lie at residues 34-58, 60-86, and 114-141; these read DCVY…HSEY, RMNP…HPPL, and AKQP…HTPN. Disordered regions lie at residues 150-175, 285-306, 376-589, and 642-669; these read PVEA…EKKL, VEDR…PDFS, GMRL…VMEE, and EEGE…EMLS. 6 stretches are compositionally biased toward basic and acidic residues: residues 164–175, 285–299, 392–406, 420–464, 478–499, and 547–579; these read KPIENNTEEKKL, VEDR…RGNS, SMDR…DTPR, KLRE…EENH, RRRE…ESKP, and NNKD…PKAE. Acidic residues-rich tracts occupy residues 580-589 and 642-659; these read VEEEGTVMEE and EEGE…GEED. Basic and acidic residues predominate over residues 660–669; that stretch reads IEKKTVEMLS.

This chain is Zinc finger CCCH domain-containing protein 17, found in Arabidopsis thaliana (Mouse-ear cress).